Reading from the N-terminus, the 445-residue chain is tRNA modification GTPase MnmE (445 aa).

The (6S)-5-formyl-5,6,7,8-tetrahydrofolate site is built by arginine 20, glutamate 79, and lysine 119. A TrmE-type G domain is found at 215-371 (GLKLAIIGPP…ILKNIEEIAE (157 aa)). Asparagine 225 provides a ligand contact to K(+). Residues 225–230 (NAGKSS), 244–250 (SNIAGTT), and 269–272 (DTAG) each bind GTP. Serine 229 contacts Mg(2+). The K(+) site is built by serine 244, isoleucine 246, and threonine 249. Threonine 250 serves as a coordination point for Mg(2+). Position 445 (lysine 445) interacts with (6S)-5-formyl-5,6,7,8-tetrahydrofolate.

The protein belongs to the TRAFAC class TrmE-Era-EngA-EngB-Septin-like GTPase superfamily. TrmE GTPase family. As to quaternary structure, homodimer. Heterotetramer of two MnmE and two MnmG subunits. Requires K(+) as cofactor.

The protein resides in the cytoplasm. Its function is as follows. Exhibits a very high intrinsic GTPase hydrolysis rate. Involved in the addition of a carboxymethylaminomethyl (cmnm) group at the wobble position (U34) of certain tRNAs, forming tRNA-cmnm(5)s(2)U34. In Rickettsia bellii (strain OSU 85-389), this protein is tRNA modification GTPase MnmE.